The primary structure comprises 354 residues: Uroporphyrinogen decarboxylase (354 aa).

Substrate contacts are provided by residues 27 to 31 (RQAGR), Asp77, Tyr154, Thr209, and His327.

Belongs to the uroporphyrinogen decarboxylase family. Homodimer.

It localises to the cytoplasm. It carries out the reaction uroporphyrinogen III + 4 H(+) = coproporphyrinogen III + 4 CO2. The protein operates within porphyrin-containing compound metabolism; protoporphyrin-IX biosynthesis; coproporphyrinogen-III from 5-aminolevulinate: step 4/4. Functionally, catalyzes the decarboxylation of four acetate groups of uroporphyrinogen-III to yield coproporphyrinogen-III. This chain is Uroporphyrinogen decarboxylase, found in Psychromonas ingrahamii (strain DSM 17664 / CCUG 51855 / 37).